The primary structure comprises 258 residues: Snake venom serine protease catroxase-2 (258 aa).

An N-terminal signal peptide occupies residues 1-18 (MVLIRVLANLLILQLSYA). The propeptide occupies 19 to 24 (QKSSEL). The Peptidase S1 domain occupies 25–249 (VVGGDECNIN…YNDWIQSIIA (225 aa)). 6 cysteine pairs are disulfide-bonded: Cys-31-Cys-163, Cys-50-Cys-66, Cys-98-Cys-256, Cys-142-Cys-210, Cys-174-Cys-189, and Cys-200-Cys-225. Asn-44 is a glycosylation site (N-linked (GlcNAc...) asparagine). Active-site charge relay system residues include His-65 and Asp-110. Ser-204 functions as the Charge relay system in the catalytic mechanism.

Belongs to the peptidase S1 family. Snake venom subfamily. In terms of assembly, monomer. Expressed by the venom gland.

Its subcellular location is the secreted. Its function is as follows. Snake venom serine protease that may act in the hemostasis system of the prey. The chain is Snake venom serine protease catroxase-2 from Crotalus atrox (Western diamondback rattlesnake).